Here is a 227-residue protein sequence, read N- to C-terminus: Cytochrome c oxidase subunit 2 (227 aa).

At 1–14 the chain is on the mitochondrial intermembrane side; it reads MAYPLQLGFQDATS. A helical membrane pass occupies residues 15–45; the sequence is PVMEELLHFHDHTLMIIFLISSLVLYIIMLM. The Mitochondrial matrix portion of the chain corresponds to 46–59; the sequence is LTTKLVHTNMMNVQ. Residues 60-87 form a helical membrane-spanning segment; that stretch reads EMEMIWTILPAIILILIALPSLHTLYMM. At 88–227 the chain is on the mitochondrial intermembrane side; sequence DEINNPLLTI…YFESWSASLA (140 aa). Cu cation contacts are provided by H161, C196, E198, C200, H204, and M207. E198 lines the Mg(2+) pocket. A Phosphotyrosine modification is found at Y218.

This sequence belongs to the cytochrome c oxidase subunit 2 family. As to quaternary structure, component of the cytochrome c oxidase (complex IV, CIV), a multisubunit enzyme composed of 14 subunits. The complex is composed of a catalytic core of 3 subunits MT-CO1, MT-CO2 and MT-CO3, encoded in the mitochondrial DNA, and 11 supernumerary subunits COX4I, COX5A, COX5B, COX6A, COX6B, COX6C, COX7A, COX7B, COX7C, COX8 and NDUFA4, which are encoded in the nuclear genome. The complex exists as a monomer or a dimer and forms supercomplexes (SCs) in the inner mitochondrial membrane with NADH-ubiquinone oxidoreductase (complex I, CI) and ubiquinol-cytochrome c oxidoreductase (cytochrome b-c1 complex, complex III, CIII), resulting in different assemblies (supercomplex SCI(1)III(2)IV(1) and megacomplex MCI(2)III(2)IV(2)). Found in a complex with TMEM177, COA6, COX18, COX20, SCO1 and SCO2. Interacts with TMEM177 in a COX20-dependent manner. Interacts with COX20. Interacts with COX16. The cofactor is Cu cation.

It localises to the mitochondrion inner membrane. The catalysed reaction is 4 Fe(II)-[cytochrome c] + O2 + 8 H(+)(in) = 4 Fe(III)-[cytochrome c] + 2 H2O + 4 H(+)(out). In terms of biological role, component of the cytochrome c oxidase, the last enzyme in the mitochondrial electron transport chain which drives oxidative phosphorylation. The respiratory chain contains 3 multisubunit complexes succinate dehydrogenase (complex II, CII), ubiquinol-cytochrome c oxidoreductase (cytochrome b-c1 complex, complex III, CIII) and cytochrome c oxidase (complex IV, CIV), that cooperate to transfer electrons derived from NADH and succinate to molecular oxygen, creating an electrochemical gradient over the inner membrane that drives transmembrane transport and the ATP synthase. Cytochrome c oxidase is the component of the respiratory chain that catalyzes the reduction of oxygen to water. Electrons originating from reduced cytochrome c in the intermembrane space (IMS) are transferred via the dinuclear copper A center (CU(A)) of subunit 2 and heme A of subunit 1 to the active site in subunit 1, a binuclear center (BNC) formed by heme A3 and copper B (CU(B)). The BNC reduces molecular oxygen to 2 water molecules using 4 electrons from cytochrome c in the IMS and 4 protons from the mitochondrial matrix. The sequence is that of Cytochrome c oxidase subunit 2 (MT-CO2) from Mammuthus primigenius (Siberian woolly mammoth).